We begin with the raw amino-acid sequence, 444 residues long: Xylose isomerase (444 aa).

Aspartate 307 and aspartate 309 together coordinate Mg(2+).

Belongs to the xylose isomerase family. In terms of assembly, homotetramer. Mg(2+) is required as a cofactor.

It localises to the cytoplasm. It carries out the reaction alpha-D-xylose = alpha-D-xylulofuranose. The chain is Xylose isomerase from Thermotoga neapolitana (strain ATCC 49049 / DSM 4359 / NBRC 107923 / NS-E).